Consider the following 161-residue polypeptide: 6,7-dimethyl-8-ribityllumazine synthase (161 aa).

Residues Phe23, Ser61 to Glu63, and Ala85 to Ile87 each bind 5-amino-6-(D-ribitylamino)uracil. Asp90–Thr91 is a (2S)-2-hydroxy-3-oxobutyl phosphate binding site. His93 functions as the Proton donor in the catalytic mechanism. Position 118 (Phe118) interacts with 5-amino-6-(D-ribitylamino)uracil. Arg132 is a binding site for (2S)-2-hydroxy-3-oxobutyl phosphate.

This sequence belongs to the DMRL synthase family.

The enzyme catalyses (2S)-2-hydroxy-3-oxobutyl phosphate + 5-amino-6-(D-ribitylamino)uracil = 6,7-dimethyl-8-(1-D-ribityl)lumazine + phosphate + 2 H2O + H(+). It participates in cofactor biosynthesis; riboflavin biosynthesis; riboflavin from 2-hydroxy-3-oxobutyl phosphate and 5-amino-6-(D-ribitylamino)uracil: step 1/2. Catalyzes the formation of 6,7-dimethyl-8-ribityllumazine by condensation of 5-amino-6-(D-ribitylamino)uracil with 3,4-dihydroxy-2-butanone 4-phosphate. This is the penultimate step in the biosynthesis of riboflavin. This is 6,7-dimethyl-8-ribityllumazine synthase from Synechococcus sp. (strain WH7803).